Consider the following 315-residue polypeptide: Methionyl-tRNA formyltransferase (315 aa).

Position 111-114 (111-114 (SLLP)) interacts with (6S)-5,6,7,8-tetrahydrofolate.

It belongs to the Fmt family.

The catalysed reaction is L-methionyl-tRNA(fMet) + (6R)-10-formyltetrahydrofolate = N-formyl-L-methionyl-tRNA(fMet) + (6S)-5,6,7,8-tetrahydrofolate + H(+). Functionally, attaches a formyl group to the free amino group of methionyl-tRNA(fMet). The formyl group appears to play a dual role in the initiator identity of N-formylmethionyl-tRNA by promoting its recognition by IF2 and preventing the misappropriation of this tRNA by the elongation apparatus. This is Methionyl-tRNA formyltransferase from Flavobacterium johnsoniae (strain ATCC 17061 / DSM 2064 / JCM 8514 / BCRC 14874 / CCUG 350202 / NBRC 14942 / NCIMB 11054 / UW101) (Cytophaga johnsonae).